A 392-amino-acid chain; its full sequence is Formate-dependent phosphoribosylglycinamide formyltransferase (392 aa).

N(1)-(5-phospho-beta-D-ribosyl)glycinamide-binding positions include 22–23 and Glu-82; that span reads EL. ATP contacts are provided by residues Arg-114, Lys-155, 160-165, 195-198, and Glu-203; these read SSGKGQ and EGVV. The ATP-grasp domain maps to 119–308; it reads RLAAEELGLP…EFALHVRAFL (190 aa). Residues Glu-267 and Glu-279 each coordinate Mg(2+). Residues Asp-286, Lys-355, and 362–363 each bind N(1)-(5-phospho-beta-D-ribosyl)glycinamide; that span reads RR.

The protein belongs to the PurK/PurT family. In terms of assembly, homodimer.

The catalysed reaction is N(1)-(5-phospho-beta-D-ribosyl)glycinamide + formate + ATP = N(2)-formyl-N(1)-(5-phospho-beta-D-ribosyl)glycinamide + ADP + phosphate + H(+). It participates in purine metabolism; IMP biosynthesis via de novo pathway; N(2)-formyl-N(1)-(5-phospho-D-ribosyl)glycinamide from N(1)-(5-phospho-D-ribosyl)glycinamide (formate route): step 1/1. Involved in the de novo purine biosynthesis. Catalyzes the transfer of formate to 5-phospho-ribosyl-glycinamide (GAR), producing 5-phospho-ribosyl-N-formylglycinamide (FGAR). Formate is provided by PurU via hydrolysis of 10-formyl-tetrahydrofolate. In Salmonella paratyphi A (strain ATCC 9150 / SARB42), this protein is Formate-dependent phosphoribosylglycinamide formyltransferase.